The chain runs to 398 residues: Odorant receptor 59b (398 aa).

Topologically, residues 1 to 46 are cytoplasmic; the sequence is MAVFKLIKPAPLTEKVQSRQGNIYLYRAMWLIGWIPPKEGVLRYVY. The helical transmembrane segment at 47-67 threads the bilayer; the sequence is LFWTCVPFAFGVFYLPVGFII. The Extracellular portion of the chain corresponds to 68–84; that stretch reads SYVQEFKNFTPGEFLTS. The chain crosses the membrane as a helical span at residues 85-105; the sequence is LQVCINVYGASVKSTITYLFL. The Cytoplasmic segment spans residues 106-141; it reads WRLRKTEILLDSLDKRLANDSDRERIHNMVARCNYA. The chain crosses the membrane as a helical span at residues 142–162; it reads FLIYSFIYCGYAGSTFLSYAL. Over 163 to 179 the chain is Extracellular; sequence SGRPPWSVYNPFIDWRD. A helical transmembrane segment spans residues 180–200; sequence GMGSLWIQAIFEYITMSFAVL. The Cytoplasmic segment spans residues 201–269; the sequence is QDQLSDTYPL…DMIRPMISRT (69 aa). The helical transmembrane segment at 270-290 threads the bilayer; the sequence is IFVQFALIGSVLGLTLVNVFF. Topologically, residues 291 to 293 are extracellular; it reads FSN. A helical membrane pass occupies residues 294-314; sequence FWKGVASLLFVITILLQTFPF. The Cytoplasmic segment spans residues 315–348; it reads CYTCNMLIDDAQDLSNEIFQSNWVDAEPRYKATL. The helical transmembrane segment at 349 to 369 threads the bilayer; the sequence is VLFMHHVQQPIIFIAGGIFPI. At 370-398 the chain is on the extracellular side; the sequence is SMNSNITVAKFAFSIITIVRQMNLAEQFQ. An N-linked (GlcNAc...) asparagine glycan is attached at Asn-374.

It belongs to the insect chemoreceptor superfamily. Heteromeric odorant receptor channel (TC 1.A.69) family. Or2a subfamily. In terms of assembly, interacts with Orco. Complexes exist early in the endomembrane system in olfactory sensory neurons (OSNs), coupling these complexes to the conserved ciliary trafficking pathway. Expressed in olfactory sensory neurons in the antenna.

It is found in the cell membrane. In terms of biological role, odorant receptor which mediates acceptance or avoidance behavior, depending on its substrates. The odorant receptor repertoire encodes a large collection of odor stimuli that vary widely in identity, intensity, and duration. Forms a complex with Orco to form odorant-sensing units, providing sensitive and prolonged odorant signaling and calcium permeability. Also plays a role in the response to N,N-Diethyl-meta-toluamide (DEET), the most widely used insect repellent worldwide. The sequence is that of Odorant receptor 59b (Or59b) from Drosophila melanogaster (Fruit fly).